Consider the following 322-residue polypeptide: Secreted effector protein SseI (322 aa).

In terms of assembly, interacts with host IQGAP1 and host TRIP6 (thyroid receptor-interacting protein 6).

Its subcellular location is the secreted. It is found in the host cytoplasm. In terms of biological role, effector proteins function to alter host cell physiology and promote bacterial survival in host tissues. This protein is required to maintain a long-term chronic systemic infection in mice. It inhibits normal cell migration of primary macrophages and dendritic cells, by a mechanism that involves interaction with the host factor IQGAP1, an important regulator of the cytoskeleton and cell migration. Also accelerates the systemic spread of infection from the gastrointestinal tract to the bloodstream, probably by interacting with host TRIP6. This is Secreted effector protein SseI (sseI) from Salmonella typhimurium (strain LT2 / SGSC1412 / ATCC 700720).